The following is a 700-amino-acid chain: Elongation factor G (700 aa).

Residues 8-290 form the tr-type G domain; the sequence is SLYRNIGISA…AVIDYLPAPT (283 aa). GTP is bound by residues 17–24, 88–92, and 142–145; these read AHIDAGKT, DTPGH, and NKMD.

It belongs to the TRAFAC class translation factor GTPase superfamily. Classic translation factor GTPase family. EF-G/EF-2 subfamily.

It localises to the cytoplasm. Catalyzes the GTP-dependent ribosomal translocation step during translation elongation. During this step, the ribosome changes from the pre-translocational (PRE) to the post-translocational (POST) state as the newly formed A-site-bound peptidyl-tRNA and P-site-bound deacylated tRNA move to the P and E sites, respectively. Catalyzes the coordinated movement of the two tRNA molecules, the mRNA and conformational changes in the ribosome. In Histophilus somni (strain 129Pt) (Haemophilus somnus), this protein is Elongation factor G.